The primary structure comprises 454 residues: Allantoinase (454 aa).

Zn(2+) contacts are provided by His60, His62, Lys147, His183, His239, and Asp312. Residue Lys147 is modified to N6-carboxylysine.

This sequence belongs to the metallo-dependent hydrolases superfamily. Allantoinase family. As to quaternary structure, homotetramer. The cofactor is Zn(2+). In terms of processing, carboxylation allows a single lysine to coordinate two zinc ions.

It catalyses the reaction (S)-allantoin + H2O = allantoate + H(+). It functions in the pathway nitrogen metabolism; (S)-allantoin degradation; allantoate from (S)-allantoin: step 1/1. In terms of biological role, catalyzes the conversion of allantoin (5-ureidohydantoin) to allantoic acid by hydrolytic cleavage of the five-member hydantoin ring. In Bacillus velezensis (strain DSM 23117 / BGSC 10A6 / LMG 26770 / FZB42) (Bacillus amyloliquefaciens subsp. plantarum), this protein is Allantoinase.